The primary structure comprises 246 residues: Bis(5'-nucleosyl)-tetraphosphatase PrpE [asymmetrical] (246 aa).

It belongs to the PrpE family. Ni(2+) serves as cofactor.

The enzyme catalyses P(1),P(4)-bis(5'-guanosyl) tetraphosphate + H2O = GMP + GTP + 2 H(+). In terms of biological role, asymmetrically hydrolyzes Ap4p to yield AMP and ATP. In Bacillus cereus (strain ATCC 14579 / DSM 31 / CCUG 7414 / JCM 2152 / NBRC 15305 / NCIMB 9373 / NCTC 2599 / NRRL B-3711), this protein is Bis(5'-nucleosyl)-tetraphosphatase PrpE [asymmetrical].